We begin with the raw amino-acid sequence, 154 residues long: Myoglobin (154 aa).

Residues 2 to 148 (GLSDGEWQLV…FRNDIAAKYK (147 aa)) form the Globin domain. The residue at position 4 (Ser-4) is a Phosphoserine. His-65 contributes to the nitrite binding site. His-65 contributes to the O2 binding site. Thr-68 is subject to Phosphothreonine. Residue His-94 coordinates heme b.

It belongs to the globin family. In terms of assembly, monomeric.

It localises to the cytoplasm. Its subcellular location is the sarcoplasm. The catalysed reaction is Fe(III)-heme b-[protein] + nitric oxide + H2O = Fe(II)-heme b-[protein] + nitrite + 2 H(+). It carries out the reaction H2O2 + AH2 = A + 2 H2O. Its function is as follows. Monomeric heme protein which primary function is to store oxygen and facilitate its diffusion within muscle tissues. Reversibly binds oxygen through a pentacoordinated heme iron and enables its timely and efficient release as needed during periods of heightened demand. Depending on the oxidative conditions of tissues and cells, and in addition to its ability to bind oxygen, it also has a nitrite reductase activity whereby it regulates the production of bioactive nitric oxide. Under stress conditions, like hypoxia and anoxia, it also protects cells against reactive oxygen species thanks to its pseudoperoxidase activity. This is Myoglobin (MB) from Meles meles (Eurasian badger).